The primary structure comprises 393 residues: NAD(P)H-quinone oxidoreductase subunit H, chloroplastic (393 aa).

The protein belongs to the complex I 49 kDa subunit family. In terms of assembly, NDH is composed of at least 16 different subunits, 5 of which are encoded in the nucleus.

Its subcellular location is the plastid. It localises to the chloroplast thylakoid membrane. It carries out the reaction a plastoquinone + NADH + (n+1) H(+)(in) = a plastoquinol + NAD(+) + n H(+)(out). It catalyses the reaction a plastoquinone + NADPH + (n+1) H(+)(in) = a plastoquinol + NADP(+) + n H(+)(out). Its function is as follows. NDH shuttles electrons from NAD(P)H:plastoquinone, via FMN and iron-sulfur (Fe-S) centers, to quinones in the photosynthetic chain and possibly in a chloroplast respiratory chain. The immediate electron acceptor for the enzyme in this species is believed to be plastoquinone. Couples the redox reaction to proton translocation, and thus conserves the redox energy in a proton gradient. This is NAD(P)H-quinone oxidoreductase subunit H, chloroplastic from Liriodendron tulipifera (Tuliptree).